The sequence spans 399 residues: Probable sugar efflux transporter (399 aa).

The next 12 helical transmembrane spans lie at 15–35 (VVTL…PVGL), 50–70 (VGMM…PFML), 81–101 (LIGL…AWSF), 103–123 (VLVI…SITS), 136–156 (AQAL…GIPI), 168–188 (MTFL…VKLL), 209–229 (PALV…YTAY), 246–266 (FATV…ILFG), 273–293 (ASGL…LLLP), 301–321 (LMLL…GMQV), 333–353 (VAMS…ALVG), and 364–384 (SIGY…LMIF).

Belongs to the major facilitator superfamily. SotB (TC 2.A.1.2) family.

Its subcellular location is the cell inner membrane. Involved in the efflux of sugars. The physiological role may be the reduction of the intracellular concentration of toxic sugars or sugar metabolites. In Klebsiella pneumoniae (strain 342), this protein is Probable sugar efflux transporter.